A 547-amino-acid chain; its full sequence is Chaperonin GroEL 1 (547 aa).

Residues 30 to 33, Lys-51, 87 to 91, Gly-415, 479 to 481, and Asp-495 each bind ATP; these read TLGP, DGTTT, and NAA.

The protein belongs to the chaperonin (HSP60) family. As to quaternary structure, forms a cylinder of 14 subunits composed of two heptameric rings stacked back-to-back. Interacts with the co-chaperonin GroES.

Its subcellular location is the cytoplasm. It carries out the reaction ATP + H2O + a folded polypeptide = ADP + phosphate + an unfolded polypeptide.. Its function is as follows. Together with its co-chaperonin GroES, plays an essential role in assisting protein folding. The GroEL-GroES system forms a nano-cage that allows encapsulation of the non-native substrate proteins and provides a physical environment optimized to promote and accelerate protein folding. The chain is Chaperonin GroEL 1 from Vibrio parahaemolyticus serotype O3:K6 (strain RIMD 2210633).